Consider the following 171-residue polypeptide: GTP-dependent dephospho-CoA kinase (171 aa).

The GTP site is built by D49, V51, D68, and E122.

The protein belongs to the GTP-dependent DPCK family.

It carries out the reaction 3'-dephospho-CoA + GTP = GDP + CoA + H(+). It participates in cofactor biosynthesis; coenzyme A biosynthesis. Functionally, catalyzes the GTP-dependent phosphorylation of the 3'-hydroxyl group of dephosphocoenzyme A to form coenzyme A (CoA). This is GTP-dependent dephospho-CoA kinase from Hyperthermus butylicus (strain DSM 5456 / JCM 9403 / PLM1-5).